The following is a 152-amino-acid chain: Protein SprT-like (152 aa).

One can recognise a SprT-like domain in the interval 7-147 (QRLVEEVSLQ…CGKCKGKLKP (141 aa)). His-67 contributes to the Zn(2+) binding site. The active site involves Glu-68. His-71 serves as a coordination point for Zn(2+).

Belongs to the SprT family. Zn(2+) is required as a cofactor.

It is found in the cytoplasm. The protein is Protein SprT-like of Bacillus cereus (strain ATCC 14579 / DSM 31 / CCUG 7414 / JCM 2152 / NBRC 15305 / NCIMB 9373 / NCTC 2599 / NRRL B-3711).